Here is a 346-residue protein sequence, read N- to C-terminus: Methionine import ATP-binding protein MetN 1 (346 aa).

An ABC transporter domain is found at 2-241; the sequence is IELKNVSKVF…PQHVTTKKFV (240 aa). 38-45 contributes to the ATP binding site; the sequence is GYSGAGKS.

The protein belongs to the ABC transporter superfamily. Methionine importer (TC 3.A.1.24) family. In terms of assembly, the complex is composed of two ATP-binding proteins (MetN), two transmembrane proteins (MetI) and a solute-binding protein (MetQ).

It localises to the cell membrane. The catalysed reaction is L-methionine(out) + ATP + H2O = L-methionine(in) + ADP + phosphate + H(+). It carries out the reaction D-methionine(out) + ATP + H2O = D-methionine(in) + ADP + phosphate + H(+). Functionally, part of the ABC transporter complex MetNIQ involved in methionine import. Responsible for energy coupling to the transport system. In Bacillus anthracis, this protein is Methionine import ATP-binding protein MetN 1.